We begin with the raw amino-acid sequence, 191 residues long: Protein GrpE (191 aa).

It belongs to the GrpE family. Homodimer.

The protein localises to the cytoplasm. In terms of biological role, participates actively in the response to hyperosmotic and heat shock by preventing the aggregation of stress-denatured proteins, in association with DnaK and GrpE. It is the nucleotide exchange factor for DnaK and may function as a thermosensor. Unfolded proteins bind initially to DnaJ; upon interaction with the DnaJ-bound protein, DnaK hydrolyzes its bound ATP, resulting in the formation of a stable complex. GrpE releases ADP from DnaK; ATP binding to DnaK triggers the release of the substrate protein, thus completing the reaction cycle. Several rounds of ATP-dependent interactions between DnaJ, DnaK and GrpE are required for fully efficient folding. This chain is Protein GrpE, found in Listeria monocytogenes serotype 4a (strain HCC23).